The following is a 223-amino-acid chain: Ribosome assembly factor mrt4 (223 aa).

This sequence belongs to the universal ribosomal protein uL10 family. As to quaternary structure, associates with the pre-60S ribosomal particle.

The protein localises to the nucleus. Its subcellular location is the nucleolus. It localises to the cytoplasm. Component of the ribosome assembly machinery. Nuclear paralog of the ribosomal protein P0, it binds pre-60S subunits at an early stage of assembly in the nucleolus, and is replaced by P0 in cytoplasmic pre-60S subunits and mature 80S ribosomes. This Dictyostelium discoideum (Social amoeba) protein is Ribosome assembly factor mrt4.